A 342-amino-acid polypeptide reads, in one-letter code: Probable tyrosine--tRNA ligase, cytoplasmic (342 aa).

Residue tyrosine 48 coordinates L-tyrosine. The short motif at 53–61 is the 'HIGH' region element; that stretch reads ITGKPHIGY. Positions 175, 179, 182, and 197 each coordinate L-tyrosine. A 'KMSKS' region motif is present at residues 231–235; the sequence is KMSSS.

The protein belongs to the class-I aminoacyl-tRNA synthetase family. In terms of assembly, homodimer.

The protein resides in the cytoplasm. The catalysed reaction is tRNA(Tyr) + L-tyrosine + ATP = L-tyrosyl-tRNA(Tyr) + AMP + diphosphate + H(+). The sequence is that of Probable tyrosine--tRNA ligase, cytoplasmic from Enterocytozoon bieneusi (strain H348) (Microsporidian parasite).